A 372-amino-acid chain; its full sequence is F-box protein AFR (372 aa).

Residues 1–15 (MAEQETTSNINTIND) are compositionally biased toward polar residues. The interval 1–27 (MAEQETTSNINTINDQAEEETRTKSQP) is disordered. An F-box domain is found at 29–74 (ISGLPNDIAELCLLRLPYPYHALYRSVSSSWNKTITNPRFLFSKQS). 5 Kelch repeats span residues 80-126 (PYLF…HALS), 135-178 (KLFV…NVNG), 179-227 (KIMA…VIGK), 229-276 (MCVT…IRDR), and 279-325 (VISE…DRVF).

In terms of assembly, part of a SCF (ASK-cullin-F-box) protein ligase complex. Interacts with SKP1A.

It functions in the pathway protein modification; protein ubiquitination. Component of SCF (ASK-cullin-F-box) E3 ubiquitin ligase complexes, which may mediate the ubiquitination and subsequent proteasomal degradation of target proteins. Part of the phyA-mediated signaling transduction pathway leading to the regulation of gene expression and hypocotyls elongation in response to red and far-red light exposure. The chain is F-box protein AFR (AFR) from Arabidopsis thaliana (Mouse-ear cress).